A 389-amino-acid chain; its full sequence is Glutamate 5-kinase (389 aa).

K26 is an ATP binding site. Residues S66, D153, and N167 each contribute to the substrate site. Residue 187–188 (TD) participates in ATP binding. In terms of domain architecture, PUA spans 293-371 (AGTLFLDQGA…EQIEWILGHR (79 aa)).

The protein belongs to the glutamate 5-kinase family.

The protein resides in the cytoplasm. The catalysed reaction is L-glutamate + ATP = L-glutamyl 5-phosphate + ADP. Its pathway is amino-acid biosynthesis; L-proline biosynthesis; L-glutamate 5-semialdehyde from L-glutamate: step 1/2. Its function is as follows. Catalyzes the transfer of a phosphate group to glutamate to form L-glutamate 5-phosphate. The polypeptide is Glutamate 5-kinase (Rhodopirellula baltica (strain DSM 10527 / NCIMB 13988 / SH1)).